A 292-amino-acid chain; its full sequence is Alpha-soluble NSF attachment protein (292 aa).

Belongs to the SNAP family.

The protein localises to the cytoplasmic vesicle. Its subcellular location is the membrane. Its function is as follows. Required for vesicular transport between the endoplasmic reticulum and the Golgi apparatus. Also between the endosome and phagosome. The chain is Alpha-soluble NSF attachment protein from Drosophila melanogaster (Fruit fly).